Here is a 95-residue protein sequence, read N- to C-terminus: Small ribosomal subunit protein uS15 (95 aa).

It belongs to the universal ribosomal protein uS15 family. In terms of assembly, part of the 30S ribosomal subunit. Forms a bridge to the 50S subunit in the 70S ribosome, contacting the 23S rRNA.

In terms of biological role, one of the primary rRNA binding proteins, it binds directly to 16S rRNA where it helps nucleate assembly of the platform of the 30S subunit by binding and bridging several RNA helices of the 16S rRNA. Functionally, forms an intersubunit bridge (bridge B4) with the 23S rRNA of the 50S subunit in the ribosome. The chain is Small ribosomal subunit protein uS15 from Streptomyces coelicolor (strain ATCC BAA-471 / A3(2) / M145).